The following is a 287-amino-acid chain: Orotidine 5'-phosphate decarboxylase (287 aa).

The active-site Proton donor is the K97.

This sequence belongs to the OMP decarboxylase family. Type 2 subfamily.

The enzyme catalyses orotidine 5'-phosphate + H(+) = UMP + CO2. The protein operates within pyrimidine metabolism; UMP biosynthesis via de novo pathway; UMP from orotate: step 2/2. This chain is Orotidine 5'-phosphate decarboxylase, found in Clostridium perfringens (strain SM101 / Type A).